The primary structure comprises 238 residues: Protein lifeguard 4 (238 aa).

The Cytoplasmic portion of the chain corresponds to 1-38 (MADTDPGYPRSSIEDDFNYGSCVASASVHIRMAFLRKV). A helical membrane pass occupies residues 39–59 (YSILSLQVLLTTVTSALFLYF). Residues 60-68 (QALRTFVHE) are Lumenal-facing. A helical membrane pass occupies residues 69-89 (SPALIVVFALGSLGLIFALTL). Residues 90 to 97 (HRHTHPLN) are Cytoplasmic-facing. The chain crosses the membrane as a helical span at residues 98–118 (LYLLFAFTLSESLAVAAVVTF). Residues 119-120 (YD) are Lumenal-facing. The helical transmembrane segment at 121 to 141 (VYLVLQAFIMTTAVFLGLTAY) threads the bilayer. The Cytoplasmic portion of the chain corresponds to 142–151 (TLQSKRDFTK). The helical transmembrane segment at 152-172 (FGAGLFAGLWILCLAGFLKLF) threads the bilayer. The Lumenal portion of the chain corresponds to 173 to 175 (FYS). A helical membrane pass occupies residues 176-196 (ETMELVLASLGALLFCGFIIY). At 197–208 (DTHSLMHRLSPE) the chain is on the cytoplasmic side. The segment at residues 209–229 (EYVIAAISLYMDIINLFLHLL) is an intramembrane region (helical). The Cytoplasmic portion of the chain corresponds to 230–238 (KFLEAVNKK).

The protein belongs to the BI1 family. LFG subfamily. As to quaternary structure, interacts with ITPR3.

The protein localises to the golgi apparatus membrane. Anti-apoptotic protein which can inhibit apoptosis induced by intrinsic and extrinsic apoptotic stimuli. Can modulate both capacitative Ca2+ entry and inositol 1,4,5-trisphosphate (IP3)-mediated Ca2+ release. The polypeptide is Protein lifeguard 4 (Tmbim4) (Mus musculus (Mouse)).